The chain runs to 98 residues: NADH-ubiquinone oxidoreductase chain 4L (98 aa).

The next 3 membrane-spanning stretches (helical) occupy residues 2 to 22 (QMTMINMILAFIMATTGLLMF), 26 to 46 (FMSSLLCLEGMMLSIFILMSI), and 59 to 79 (FPLVLLVFAACEAAIGLSLLV).

Belongs to the complex I subunit 4L family. In terms of assembly, core subunit of respiratory chain NADH dehydrogenase (Complex I) which is composed of 45 different subunits.

It localises to the mitochondrion inner membrane. It catalyses the reaction a ubiquinone + NADH + 5 H(+)(in) = a ubiquinol + NAD(+) + 4 H(+)(out). Core subunit of the mitochondrial membrane respiratory chain NADH dehydrogenase (Complex I) which catalyzes electron transfer from NADH through the respiratory chain, using ubiquinone as an electron acceptor. Part of the enzyme membrane arm which is embedded in the lipid bilayer and involved in proton translocation. The protein is NADH-ubiquinone oxidoreductase chain 4L (MT-ND4L) of Echinosorex gymnura (Moon rat).